The sequence spans 970 residues: N-alpha-acetyltransferase 25, NatB auxiliary subunit (970 aa).

TPR repeat units lie at residues 11-44, 45-78, 79-112, and 114-146; these read NDRR…HRDL, HCAK…EPTD, DNSL…VPNS, and EYHS…VPKN.

The protein belongs to the MDM20/NAA25 family. In terms of assembly, component of the N-terminal acetyltransferase B (NatB) complex which is composed of NAA20 and NAA25.

Its subcellular location is the cytoplasm. In terms of biological role, non-catalytic subunit of the NatB complex which catalyzes acetylation of the N-terminal methionine residues of peptides beginning with Met-Asp, Met-Glu, Met-Asn and Met-Gln. May play a role in normal cell-cycle progression. The sequence is that of N-alpha-acetyltransferase 25, NatB auxiliary subunit (Naa25) from Rattus norvegicus (Rat).